We begin with the raw amino-acid sequence, 207 residues long: Ribosome maturation factor RimM (207 aa).

The region spanning 130–207 is the PRC barrel domain; it reads EDEFYWVDLI…RIVVDWGLDY (78 aa).

It belongs to the RimM family. In terms of assembly, binds ribosomal protein uS19.

It is found in the cytoplasm. An accessory protein needed during the final step in the assembly of 30S ribosomal subunit, possibly for assembly of the head region. Essential for efficient processing of 16S rRNA. May be needed both before and after RbfA during the maturation of 16S rRNA. It has affinity for free ribosomal 30S subunits but not for 70S ribosomes. This is Ribosome maturation factor RimM from Cupriavidus taiwanensis (strain DSM 17343 / BCRC 17206 / CCUG 44338 / CIP 107171 / LMG 19424 / R1) (Ralstonia taiwanensis (strain LMG 19424)).